We begin with the raw amino-acid sequence, 155 residues long: Ribosome maturation factor RimP (155 aa).

Belongs to the RimP family.

It localises to the cytoplasm. In terms of biological role, required for maturation of 30S ribosomal subunits. This chain is Ribosome maturation factor RimP, found in Hamiltonella defensa subsp. Acyrthosiphon pisum (strain 5AT).